Consider the following 161-residue polypeptide: Nucleotide-binding protein AZOSEA28950 (161 aa).

Belongs to the YajQ family.

Its function is as follows. Nucleotide-binding protein. The protein is Nucleotide-binding protein AZOSEA28950 of Aromatoleum aromaticum (strain DSM 19018 / LMG 30748 / EbN1) (Azoarcus sp. (strain EbN1)).